A 154-amino-acid polypeptide reads, in one-letter code: Plastocyanin, chloroplastic (154 aa).

A chloroplast-targeting transit peptide spans 1–57; the sequence is MAALSSAAVTIPSMAPSAPGRRRMRSSLVVRASLGKAAGAAAVAVAASAMLAGGAMA. In terms of domain architecture, Plastocyanin-like spans 58 to 154; sequence QEVLLGANGG…AGMVGKVTVN (97 aa). Cu cation is bound by residues His94, Cys139, His142, and Met147.

It belongs to the plastocyanin family. Cu(2+) serves as cofactor.

The protein resides in the plastid. The protein localises to the chloroplast thylakoid membrane. Its function is as follows. Participates in electron transfer between P700 and the cytochrome b6-f complex in photosystem I. The sequence is that of Plastocyanin, chloroplastic (PETE) from Oryza sativa subsp. indica (Rice).